The following is a 266-amino-acid chain: Large ribosomal subunit protein uL3 (266 aa).

Positions 124-149 are disordered; that stretch reads NQKIGPKSHGGGGGSKPVRQTGSLGD.

Belongs to the universal ribosomal protein uL3 family. In terms of assembly, part of the 50S ribosomal subunit. Forms a cluster with proteins L14 and L19.

In terms of biological role, one of the primary rRNA binding proteins, it binds directly near the 3'-end of the 23S rRNA, where it nucleates assembly of the 50S subunit. The chain is Large ribosomal subunit protein uL3 from Mycoplasmopsis pulmonis (strain UAB CTIP) (Mycoplasma pulmonis).